The chain runs to 206 residues: Large ribosomal subunit protein uL4 (206 aa).

A disordered region spans residues 51–96 (LTRAEVKHSTKKPFRQKGTGNARAGMTSTPNRRGGGRAFPNKPDEN).

Belongs to the universal ribosomal protein uL4 family. Part of the 50S ribosomal subunit.

In terms of biological role, one of the primary rRNA binding proteins, this protein initially binds near the 5'-end of the 23S rRNA. It is important during the early stages of 50S assembly. It makes multiple contacts with different domains of the 23S rRNA in the assembled 50S subunit and ribosome. Functionally, forms part of the polypeptide exit tunnel. This is Large ribosomal subunit protein uL4 from Chromobacterium violaceum (strain ATCC 12472 / DSM 30191 / JCM 1249 / CCUG 213 / NBRC 12614 / NCIMB 9131 / NCTC 9757 / MK).